Consider the following 407-residue polypeptide: MSKQKPSLWRALRALSFIISIPLLIQYLVLKWYSTSQNTPTPVFHEPNHETNLTVWEVLSNDDRVSKFVDVIGKLPDIVRGLSAPQARFTVYAPVNEAFDSFYFPPDPPPFFGLFIAGCHMGPGPVPAERLPSMGTVSSFVNGDIFFTYKQRISVQKDKSGLTLNRAARVLPVNASQSIAVNGFVHHIDTVLELPNSTAHALRTRPELSKLRRGLEATKLSESIYDTNAHVSQTIFAPTNAAFDRLGKTATKFLFSHGGRPYLRALLKYHVVANKTLFSDSYWPHGGAKLMDLSLIPNKDSHQFDLPTLHNNLTLQVESRKIHKKWHLNVLKDQVAEGKSHDSIPVSMPDVILMDGVMHFIDSILLPPAKSEQRKTSWLSRLKSSLGHNKQSIEDLVTLLGPYIDEP.

Positions 1 to 35 (MSKQKPSLWRALRALSFIISIPLLIQYLVLKWYST) are cleaved as a signal peptide. Asn-52, Asn-174, Asn-196, Asn-274, and Asn-312 each carry an N-linked (GlcNAc...) asparagine glycan. FAS1 domains are found at residues 52–192 (NLTV…DTVL) and 195–365 (PNST…DSIL).

In terms of assembly, might be part of an extracellular enzyme complex composed of GIP1, aurF, aurO and aurS.

It localises to the secreted. The protein localises to the extracellular space. Its pathway is pigment biosynthesis. In terms of biological role, part of the gene cluster that mediates the biosynthesis of aurofusarin, a red mycelium pigment which is acting as a mycotoxin. The first step is performed by the polyketide synthase which condenses one acetyl-CoA and 6 malonyl-CoA units to form the first intermediate, the cyclic heptaketide and yellow pigment YWA1. The C2 hydroxyl group in the pyrone ring of YWA1 is probably formed during ring closure by an aldol-type cyclization reaction. The dehydratase aurZ then acts as the first tailoring enzyme in the aurofusarin biosynthetic pathway by converting YWA1 to nor-rubrofusarin. Nor-rubrofusarin is then methylated to rubrofusarin by the O-methyltransferase aurJ. Rubrofusarin is then transported across the plasma membrane by the rubrofusarin-specific pump aurT for further enzymatic processing by the extracellular complex composed of GIP1, aurF, aurO and aurS to yield aurofusarin. This chain is Aurofusarin biosynthesis cluster protein S, found in Gibberella zeae (strain ATCC MYA-4620 / CBS 123657 / FGSC 9075 / NRRL 31084 / PH-1) (Wheat head blight fungus).